Consider the following 272-residue polypeptide: Cell division protein DivIB (272 aa).

The Cytoplasmic segment spans residues 1–21 (MRLSSHGKKTVSTSNNPVFNR). The helical transmembrane segment at 22 to 42 (IGLFFTAAILFALFLQMLFFL) threads the bilayer. Residues 43-115 (RPWQDIKETK…GTAIIRVNEN (73 aa)) enclose the POTRA domain. Over 43 to 272 (RPWQDIKETK…SSSKSSNSSK (230 aa)) the chain is Extracellular. Positions 253–272 (LSSLSSDKSKSSSKSSNSSK) are disordered.

The protein belongs to the FtsQ/DivIB family. DivIB subfamily.

It is found in the cell membrane. Cell division protein that may be involved in stabilizing or promoting the assembly of the division complex. This Oenococcus oeni (strain ATCC BAA-331 / PSU-1) protein is Cell division protein DivIB.